The primary structure comprises 555 residues: Glutamine--tRNA ligase (555 aa).

The short motif at 34–44 (PEPNGYLHIGH) is the 'HIGH' region element. ATP contacts are provided by residues 35–37 (EPN) and 41–47 (HIGHAKS). The L-glutamine site is built by Asp-67 and Tyr-212. ATP-binding positions include Thr-231, 261-262 (RL), and 269-271 (MSK). Residues 268 to 272 (VMSKR) carry the 'KMSKS' region motif. Residues 317 to 324 (TKQDNTIE) form an interaction with tRNA region.

This sequence belongs to the class-I aminoacyl-tRNA synthetase family. Monomer.

The protein resides in the cytoplasm. The enzyme catalyses tRNA(Gln) + L-glutamine + ATP = L-glutaminyl-tRNA(Gln) + AMP + diphosphate. The sequence is that of Glutamine--tRNA ligase from Enterobacter sp. (strain 638).